The following is a 500-amino-acid chain: Cytosol aminopeptidase (500 aa).

Residues Lys-265 and Asp-270 each coordinate Mn(2+). Lys-277 is an active-site residue. Mn(2+)-binding residues include Asp-288, Asp-347, and Glu-349. Arg-351 is an active-site residue.

Belongs to the peptidase M17 family. Requires Mn(2+) as cofactor.

It is found in the cytoplasm. The enzyme catalyses Release of an N-terminal amino acid, Xaa-|-Yaa-, in which Xaa is preferably Leu, but may be other amino acids including Pro although not Arg or Lys, and Yaa may be Pro. Amino acid amides and methyl esters are also readily hydrolyzed, but rates on arylamides are exceedingly low.. The catalysed reaction is Release of an N-terminal amino acid, preferentially leucine, but not glutamic or aspartic acids.. Functionally, presumably involved in the processing and regular turnover of intracellular proteins. Catalyzes the removal of unsubstituted N-terminal amino acids from various peptides. In Rickettsia prowazekii (strain Madrid E), this protein is Cytosol aminopeptidase (pepA).